The primary structure comprises 145 residues: Acidic phospholipase A2 1 (145 aa).

Positions 1-21 are cleaved as a signal peptide; it reads MYPAHLLVLLAVCVSLLGATA. A propeptide spanning residues 22–27 is cleaved from the precursor; that stretch reads IPPLPL. Disulfide bonds link Cys38-Cys98, Cys54-Cys144, Cys56-Cys72, Cys71-Cys125, Cys78-Cys118, Cys87-Cys111, and Cys105-Cys116. The Ca(2+) site is built by Tyr55, Gly57, and Gly59. Residue His75 is part of the active site. Asp76 is a binding site for Ca(2+). Asp119 is an active-site residue.

Belongs to the phospholipase A2 family. Group I subfamily. D49 sub-subfamily. As to quaternary structure, monomer. Requires Ca(2+) as cofactor. In terms of tissue distribution, expressed by the venom gland.

It localises to the secreted. The enzyme catalyses a 1,2-diacyl-sn-glycero-3-phosphocholine + H2O = a 1-acyl-sn-glycero-3-phosphocholine + a fatty acid + H(+). Functionally, PLA2 catalyzes the calcium-dependent hydrolysis of the 2-acyl groups in 3-sn-phosphoglycerides. The polypeptide is Acidic phospholipase A2 1 (Laticauda semifasciata (Black-banded sea krait)).